The primary structure comprises 165 residues: Protein-export protein SecB (165 aa).

It belongs to the SecB family. Homotetramer, a dimer of dimers. One homotetramer interacts with 1 SecA dimer.

It is found in the cytoplasm. In terms of biological role, one of the proteins required for the normal export of preproteins out of the cell cytoplasm. It is a molecular chaperone that binds to a subset of precursor proteins, maintaining them in a translocation-competent state. It also specifically binds to its receptor SecA. In Marinobacter nauticus (strain ATCC 700491 / DSM 11845 / VT8) (Marinobacter aquaeolei), this protein is Protein-export protein SecB.